The chain runs to 538 residues: Cytosolic Fe-S cluster assembly factor NAR1 homolog (538 aa).

[4Fe-4S] cluster contacts are provided by cysteine 19, cysteine 64, cysteine 67, cysteine 70, cysteine 218, cysteine 273, cysteine 453, and cysteine 457.

The protein belongs to the NARF family.

Its subcellular location is the cytoplasm. The protein localises to the nucleus. In terms of biological role, component of the cytosolic Fe/S protein assembly machinery. Required for maturation of extramitochondrial Fe/S proteins. May play a role in the transfer of pre-assembled Fe/S clusters to target apoproteins. This chain is Cytosolic Fe-S cluster assembly factor NAR1 homolog, found in Schizosaccharomyces pombe (strain 972 / ATCC 24843) (Fission yeast).